The chain runs to 364 residues: Chorismate synthase (364 aa).

Arg-47 contacts NADP(+). FMN is bound by residues 124–126 (RAS), Gly-287, 302–306 (KPTAT), and Arg-328.

This sequence belongs to the chorismate synthase family. Homotetramer. The cofactor is FMNH2.

It catalyses the reaction 5-O-(1-carboxyvinyl)-3-phosphoshikimate = chorismate + phosphate. It functions in the pathway metabolic intermediate biosynthesis; chorismate biosynthesis; chorismate from D-erythrose 4-phosphate and phosphoenolpyruvate: step 7/7. Functionally, catalyzes the anti-1,4-elimination of the C-3 phosphate and the C-6 proR hydrogen from 5-enolpyruvylshikimate-3-phosphate (EPSP) to yield chorismate, which is the branch point compound that serves as the starting substrate for the three terminal pathways of aromatic amino acid biosynthesis. This reaction introduces a second double bond into the aromatic ring system. The sequence is that of Chorismate synthase from Prochlorococcus marinus (strain MIT 9515).